The sequence spans 234 residues: MRLVQLSRHSIAFPSPEGALREPNGLLALGGDLSPARLLMAYQRGIFPWFSPGDPILWWSPDPRAILQPETLHISRSMKRFHKRSPYRVTLNYAFGQVIEGCANDRDEGTWITRDVVEAYHRLHELGHAHSIEVWRHNALVGGMYGVSQGTLFCGESMFSRQENASKTALLVFCAEFIRQGGKLIDCQVLNSHTASLGAVEIPRRQYLEHLGSLRQQRLPGHFWVPRTLFSPQA.

The protein belongs to the L/F-transferase family.

It localises to the cytoplasm. The enzyme catalyses N-terminal L-lysyl-[protein] + L-leucyl-tRNA(Leu) = N-terminal L-leucyl-L-lysyl-[protein] + tRNA(Leu) + H(+). It catalyses the reaction N-terminal L-arginyl-[protein] + L-leucyl-tRNA(Leu) = N-terminal L-leucyl-L-arginyl-[protein] + tRNA(Leu) + H(+). The catalysed reaction is L-phenylalanyl-tRNA(Phe) + an N-terminal L-alpha-aminoacyl-[protein] = an N-terminal L-phenylalanyl-L-alpha-aminoacyl-[protein] + tRNA(Phe). Its function is as follows. Functions in the N-end rule pathway of protein degradation where it conjugates Leu, Phe and, less efficiently, Met from aminoacyl-tRNAs to the N-termini of proteins containing an N-terminal arginine or lysine. The polypeptide is Leucyl/phenylalanyl-tRNA--protein transferase (Citrobacter koseri (strain ATCC BAA-895 / CDC 4225-83 / SGSC4696)).